Reading from the N-terminus, the 1469-residue chain is MDVDAEREKITQEIKELERILDPGSSGSHVEISESSLESDSEADSLPSEDLDPADPPISEEERWGEASNDEDDPKDKTLPEDPETCLQLNMVYQEVIQEKLAEANLLLAQNREQQEELMRDLAGSKGTKVKDGKSLPPSTYMGHFMKPYFKDKVTGVGPPANEDTREKAAQGIKAFEELLVTKWKNWEKALLRKSVVSDRLQRLLQPKLLKLEYLHQKQSKVSSELERQALEKQGREAEKEIQDINQLPEEALLGNRLDSHDWEKISNINFEGSRSAEEIRKFWQNSEHPSINKQEWSREEEERLQAIAAAHGHLEWQKIAEELGTSRSAFQCLQKFQQHNKALKRKEWTEEEDRMLTQLVQEMRVGSHIPYRRIVYYMEGRDSMQLIYRWTKSLDPGLKKGYWAPEEDAKLLQAVAKYGEQDWFKIREEVPGRSDAQCRDRYLRRLHFSLKKGRWNLKEEEQLIELIEKYGVGHWAKIASELPHRSGSQCLSKWKIMMGKKQGLRRRRRRARHSVRWSSTSSSGSSSGSSGGSSSSSSSSSEEDEPEQAQAGEGDRALLSPQYMVPDMDLWVPARQSTSQPWRGGAGAWLGGPAASLSPPKGSSASQGGSKEASTTAAAPGEETSPVQVPARAHGPVPRSAQASHSADTRPAGAEKQALEGGRRLLTVPVETVLRVLRANTAARSCTQKEQLRQPPLPTSSPGVSSGDSVARSHVQWLRHRATQSGQRRWRHALHRRLLNRRLLLAVTPWVGDVVVPCTQASQRPAVVQTQADGLREQLQQARLASTPVFTLFTQLFHIDTAGCLEVVRERKALPPRLPQAGARDPPVHLLQASSSAQSTPGHLFPNVPAQEASKSASHKGSRRLASSRVERTLPQASLLASTGPRPKPKTVSELLQEKRLQEARAREATRGPVVLPSQLLVSSSVILQPPLPHTPHGRPAPGPTVLNVPLSGPGAPAAAKPGTSGSWQEAGTSAKDKRLSTMQALPLAPVFSEAEGTAPAASQAPALGPGQISVSCPESGLGQSQAPAASRKQGLPEAPPFLPAAPSPTPLPVQPLSLTHIGGPHVATSVPLPVTWVLTAQGLLPVPVPAVVSLPRPAGTPGPAGLLATLLPPLTETRAAQGPRAPALSSSWQPPANMNREPEPSCRTDTPAPPTHALSQSPAEADGSVAFVPGEAQVAREIPEPRTSSHADPPEAEPPWSGRLPAFGGVIPATEPRGTPGSPSGTQEPRGPLGLEKLPLRQPGPEKGALDLEKPPLPQPGPEKGALDLGLLSQEGEAATQQWLGGQRGVRVPLLGSRLPYQPPALCSLRALSGLLLHKKALEHKATSLVVGGEAERPAGALQASLGLVRGQLQDNPAYLLLRARFLAAFTLPALLATLAPQGVRTTLSVPSRVGSESEDEDLLSELELADRDGQPGCTTATCPIQGAPDSGKCSASSCLDTSNDPDDLDVLRTRHARHTRKRRRLV.

The segment at 16–82 (ELERILDPGS…DPKDKTLPED (67 aa)) is disordered. Positions 24 to 36 (GSSGSHVEISESS) are enriched in low complexity. Residues 37 to 53 (LESDSEADSLPSEDLDP) show a composition bias toward acidic residues. Serine 68 is modified (phosphoserine). Positions 84-133 (ETCLQLNMVYQEVIQEKLAEANLLLAQNREQQEELMRDLAGSKGTKVKDG) are SNAPC5-binding. In terms of domain architecture, Myb-like 1 spans 250–288 (EEALLGNRLDSHDWEKISNINFEGSRSAEEIRKFWQNSE). The 55-residue stretch at 289–343 (HPSINKQEWSREEEERLQAIAAAHGHLEWQKIAEELGTSRSAFQCLQKFQQHNKA) folds into the HTH myb-type 1 domain. Residues 317-341 (WQKIAEELGTSRSAFQCLQKFQQHN) constitute a DNA-binding region (H-T-H motif). The Myb-like 2 domain occupies 344–395 (LKRKEWTEEEDRMLTQLVQEMRVGSHIPYRRIVYYMEGRDSMQLIYRWTKSL). HTH myb-type domains follow at residues 396–451 (DPGL…HFSL) and 452–503 (KKGR…GKKQ). 2 consecutive DNA-binding regions (H-T-H motif) follow at residues 424–447 (WFKI…LRRL) and 476–499 (WAKI…KIMM). Disordered stretches follow at residues 501 to 558 (KKQG…GDRA), 577 to 661 (QSTS…QALE), 685 to 710 (RSCT…SGDS), 834 to 894 (ASSS…KTVS), 932 to 981 (PLPH…DKRL), 1001 to 1051 (PAAS…PSPT), 1121 to 1167 (AAQG…PAEA), and 1184 to 1266 (IPEP…GPEK). The span at 503–516 (QGLRRRRRRARHSV) shows a compositional bias: basic residues. Positions 519-541 (SSTSSSGSSSGSSGGSSSSSSSS) are enriched in low complexity. Serine 599 is subject to Phosphoserine. The segment covering 602-618 (KGSSASQGGSKEASTTA) has biased composition (polar residues). Serine 626 carries the phosphoserine modification. The segment covering 932 to 944 (PLPHTPHGRPAPG) has biased composition (pro residues). Residues 951-968 (PLSGPGAPAAAKPGTSGS) are compositionally biased toward low complexity. The segment covering 1014-1029 (ISVSCPESGLGQSQAP) has biased composition (polar residues). Pro residues predominate over residues 1039–1051 (EAPPFLPAAPSPT). Threonine 1157 carries the post-translational modification Phosphothreonine. A compositionally biased stretch (basic and acidic residues) spans 1184–1195 (IPEPRTSSHADP). Serine 1224 carries the phosphoserine modification. Residues 1281–1393 (ATQQWLGGQR…QGVRTTLSVP (113 aa)) form an SNAPC2-binding region. Phosphoserine is present on residues serine 1398, serine 1400, and serine 1440. Positions 1430–1449 (APDSGKCSASSCLDTSNDPD) are disordered. The span at 1436-1445 (CSASSCLDTS) shows a compositional bias: polar residues.

As to quaternary structure, part of the SNAPc complex composed of 5 subunits: SNAPC1, SNAPC2, SNAPC3, SNAPC4 and SNAPC5. SNAPC4 interacts with SNAPC1, SNAPC2, SNAPC5, BRF2 and TBP.

Its subcellular location is the nucleus. Functionally, part of the SNAPc complex required for the transcription of both RNA polymerase II and III small-nuclear RNA genes. Binds to the proximal sequence element (PSE), a non-TATA-box basal promoter element common to these 2 types of genes. Recruits TBP and BRF2 to the U6 snRNA TATA box. This is snRNA-activating protein complex subunit 4 from Homo sapiens (Human).